The primary structure comprises 349 residues: 5-deoxyribose 1-phosphate isomerase (349 aa).

Residues 49-51 (RGA), R92, and Q199 each bind substrate. The Proton donor role is filled by D240. Substrate is bound at residue 250 to 251 (NK).

The protein belongs to the EIF-2B alpha/beta/delta subunits family. DrdI subfamily.

The catalysed reaction is 5-deoxy-alpha-D-ribose 1-phosphate = 5-deoxy-D-ribulose 1-phosphate. It participates in carbohydrate degradation. Catalyzes the isomerization of 5-deoxy-alpha-D-ribose 1-phosphate to 5-deoxy-D-ribulose 1-phosphate, as part of a 5-deoxyribose salvage pathway that recycles this toxic radical SAM enzyme by-product to mainstream metabolites. In Clostridium botulinum (strain Loch Maree / Type A3), this protein is 5-deoxyribose 1-phosphate isomerase.